Reading from the N-terminus, the 132-residue chain is Translation initiation factor 5A (132 aa).

K36 bears the Hypusine mark.

It belongs to the eIF-5A family.

The protein localises to the cytoplasm. Its function is as follows. Functions by promoting the formation of the first peptide bond. This chain is Translation initiation factor 5A (eIF5A), found in Desulfurococcus amylolyticus (strain DSM 18924 / JCM 16383 / VKM B-2413 / 1221n) (Desulfurococcus kamchatkensis).